Reading from the N-terminus, the 257-residue chain is Imidazole glycerol phosphate synthase subunit HisF (257 aa).

Active-site residues include Asp11 and Asp130.

The protein belongs to the HisA/HisF family. Heterodimer of HisH and HisF.

The protein resides in the cytoplasm. The catalysed reaction is 5-[(5-phospho-1-deoxy-D-ribulos-1-ylimino)methylamino]-1-(5-phospho-beta-D-ribosyl)imidazole-4-carboxamide + L-glutamine = D-erythro-1-(imidazol-4-yl)glycerol 3-phosphate + 5-amino-1-(5-phospho-beta-D-ribosyl)imidazole-4-carboxamide + L-glutamate + H(+). It functions in the pathway amino-acid biosynthesis; L-histidine biosynthesis; L-histidine from 5-phospho-alpha-D-ribose 1-diphosphate: step 5/9. Its function is as follows. IGPS catalyzes the conversion of PRFAR and glutamine to IGP, AICAR and glutamate. The HisF subunit catalyzes the cyclization activity that produces IGP and AICAR from PRFAR using the ammonia provided by the HisH subunit. In Shewanella sediminis (strain HAW-EB3), this protein is Imidazole glycerol phosphate synthase subunit HisF.